A 541-amino-acid chain; its full sequence is Neutral amino acid transporter B(0) (541 aa).

Met-1 bears the N-acetylmethionine mark. Residues 1 to 51 (MVADPPRDSKGLAAAEPTANGGLALASIEDQGAAAGGYCGSRDQVRRCLRA) lie on the Cytoplasmic side of the membrane. A helical membrane pass occupies residues 52–81 (NLLVLLTVVAVVAGVALGLGVSGAGGALAL). Topologically, residues 82–94 (GPERLSAFVFPGE) are extracellular. The helical transmembrane segment at 95–116 (LLLRLLRMIILPLVVCSLIGGA) threads the bilayer. The Cytoplasmic portion of the chain corresponds to 117-130 (ASLDPGALGRLGAW). The chain crosses the membrane as a helical span at residues 131–153 (ALLFFLVTTLLASALGVGLALAL). Topologically, residues 154-224 (QPGAASAAIN…GTRVKVPVGQ (71 aa)) are extracellular. N-linked (GlcNAc...) asparagine glycosylation is found at Asn-163 and Asn-212. A helical transmembrane segment spans residues 225–248 (EVEGMNILGLVVFAIVFGVALRKL). Topologically, residues 249 to 257 (GPEGELLIR) are cytoplasmic. Residues 258–285 (FFNSFNEATMVLVSWIMWYAPVGIMFLV) form a helical membrane-spanning segment. Residues 286–306 (AGKIVEMEDVGLLFARLGKYI) lie on the Extracellular side of the membrane. A helical transmembrane segment spans residues 307-328 (LCCLLGHAIHGLLVLPLIYFLF). Topologically, residues 329 to 333 (TRKNP) are cytoplasmic. The discontinuously helical intramembrane region spans 334 to 364 (YRFLWGIVTPLATAFGTSSSSATLPLMMKCV). At 365–373 (EENNGVAKH) the chain is on the cytoplasmic side. A helical transmembrane segment spans residues 374-400 (ISRFILPIGATVNMDGAALFQCVAAVF). Na(+)-binding residues include Gly-382, Thr-384, and Asn-386. The Extracellular portion of the chain corresponds to 401–413 (IAQLSQQSLDFVK). An intramembrane region (discontinuously helical) is located at residues 414–447 (IITILVTATASSVGAAGIPAGGVLTLAIILEAVN). At 448 to 460 (LPVDHISLILAVD) the chain is on the extracellular side. A helical transmembrane segment spans residues 461–482 (WLVDRSCTVLNVEGDALGAGLL). Na(+) contacts are provided by Asn-471 and Asp-475. The Cytoplasmic portion of the chain corresponds to 483–541 (QNYVDRTESRSTEPELIQVKSELPLDPLPVPTEEGNPLLKHYRGPAGDATVASEKESVM). Ser-493 is modified (phosphoserine). Thr-494 carries the phosphothreonine modification. A phosphoserine mark is found at Ser-503, Ser-535, and Ser-539. The disordered stretch occupies residues 511–541 (PVPTEEGNPLLKHYRGPAGDATVASEKESVM).

Belongs to the dicarboxylate/amino acid:cation symporter (DAACS) (TC 2.A.23) family. SLC1A5 subfamily. Homotrimer. Interacts with ERVH48-1/suppressyn; may negatively regulate syncytialization. Placenta, lung, skeletal muscle, kidney, pancreas, and intestine. Expressed in CD34-positive hematopoietic progenitors (at protein level).

It is found in the cell membrane. It localises to the melanosome. It catalyses the reaction L-glutamine(out) + L-serine(in) + Na(+)(out) = L-glutamine(in) + L-serine(out) + Na(+)(in). The enzyme catalyses L-glutamine(in) + L-serine(out) + Na(+)(out) = L-glutamine(out) + L-serine(in) + Na(+)(in). The catalysed reaction is L-threonine(in) + L-glutamine(out) + Na(+)(out) = L-threonine(out) + L-glutamine(in) + Na(+)(in). It carries out the reaction L-threonine(out) + L-glutamine(in) + Na(+)(out) = L-threonine(in) + L-glutamine(out) + Na(+)(in). It catalyses the reaction L-asparagine(in) + L-glutamine(out) + Na(+)(out) = L-asparagine(out) + L-glutamine(in) + Na(+)(in). The enzyme catalyses L-asparagine(out) + L-glutamine(in) + Na(+)(out) = L-asparagine(in) + L-glutamine(out) + Na(+)(in). The catalysed reaction is L-glutamine(in) + L-alanine(out) + Na(+)(out) = L-glutamine(out) + L-alanine(in) + Na(+)(in). It carries out the reaction L-valine(out) + L-glutamine(in) + Na(+)(out) = L-valine(in) + L-glutamine(out) + Na(+)(in). It catalyses the reaction L-glutamine(in) + L-methionine(out) + Na(+)(out) = L-glutamine(out) + L-methionine(in) + Na(+)(in). The enzyme catalyses L-glutamine(in) + L-glutamate(out) + Na(+)(out) + H(+)(out) = L-glutamine(out) + L-glutamate(in) + Na(+)(in) + H(+)(in). The catalysed reaction is D-serine(in) + L-glutamine(out) + Na(+)(out) = D-serine(out) + L-glutamine(in) + Na(+)(in). It carries out the reaction D-serine(in) + L-alanine(out) + Na(+)(out) = D-serine(out) + L-alanine(in) + Na(+)(in). It catalyses the reaction nitrate(in) = nitrate(out). The enzyme catalyses iodide(out) = iodide(in). The catalysed reaction is thiocyanate(in) = thiocyanate(out). Regulated by L-cysteine, which can either inhibit substrate influx or trigger substrate efflux without being transported itself. Functionally, sodium-coupled antiporter of neutral amino acids. In a tri-substrate transport cycle, exchanges neutral amino acids between the extracellular and intracellular compartments, coupled to the inward cotransport of at least one sodium ion. The preferred substrate is the essential amino acid L-glutamine, a precursor for biosynthesis of proteins, nucleotides and amine sugars as well as an alternative fuel for mitochondrial oxidative phosphorylation. Exchanges L-glutamine with other neutral amino acids such as L-serine, L-threonine and L-asparagine in a bidirectional way. Provides L-glutamine to proliferating stem and activated cells driving the metabolic switch toward cell differentiation. The transport cycle is usually pH-independent, with the exception of L-glutamate. Transports extracellular L-glutamate coupled to the cotransport of one proton and one sodium ion in exchange for intracellular L-glutamine counter-ion. May provide for L-glutamate uptake in glial cells regulating glutamine/glutamate cycle in the nervous system. Can transport D-amino acids. Mediates D-serine release from the retinal glia potentially affecting NMDA receptor function in retinal neurons. Displays sodium- and amino acid-dependent but uncoupled channel-like anion conductance with a preference SCN(-) &gt;&gt; NO3(-) &gt; I(-) &gt; Cl(-). Through binding of the fusogenic protein syncytin-1/ERVW-1 may mediate trophoblasts syncytialization, the spontaneous fusion of their plasma membranes, an essential process in placental development. In terms of biological role, (Microbial infection) Acts as a cell surface receptor for Feline endogenous virus RD114. Its function is as follows. (Microbial infection) Acts as a cell surface receptor for Baboon M7 endogenous virus. (Microbial infection) Acts as a cell surface receptor for type D simian retroviruses. The sequence is that of Neutral amino acid transporter B(0) from Homo sapiens (Human).